The sequence spans 151 residues: Transcription factor ATOH7 (151 aa).

The 53-residue stretch at 39 to 91 folds into the bHLH domain; sequence KRRLAANARERRRMQGLNTAFDRLRKVVPQWGQDKKLSKYETLQMALSYIMAL.

It localises to the nucleus. Its subcellular location is the perikaryon. The protein resides in the cell projection. The protein localises to the axon. Functionally, transcription factor that binds to DNA at the consensus sequence 5'-CAG[GC]TG-3'. Positively regulates the determination of retinal ganglion cell fate and formation of the optic nerve and retino-hypothalamic tract. Required for retinal circadian rhythm photoentrainment. Plays a role in brainstem auditory signaling and binaural processing. During retinal neurogenesis, activates its own transcription, as well as the transcription of CHRNB3 and BRN3. The sequence is that of Transcription factor ATOH7 from Gallus gallus (Chicken).